Reading from the N-terminus, the 493-residue chain is Telomere-binding protein subunit alpha (493 aa).

The segment at 1-30 is disordered; the sequence is MSSAKRSTSRVSKKKAAPAKDGAPKKREQS. Residues 7–17 are compositionally biased toward basic residues; the sequence is STSRVSKKKAA.

The protein belongs to the telombin family. As to quaternary structure, heterodimer of an alpha and a beta subunit.

It localises to the nucleus. Its subcellular location is the chromosome. It is found in the telomere. In terms of biological role, may function as protective capping of the single-stranded telomeric overhang. May also participate in telomere length regulation during DNA replication. The polypeptide is Telomere-binding protein subunit alpha (STY56V) (Stylonychia mytilus (Ciliate)).